The sequence spans 1380 residues: DNA-directed RNA polymerase subunit beta (1380 aa).

Belongs to the RNA polymerase beta chain family. As to quaternary structure, the RNAP catalytic core consists of 2 alpha, 1 beta, 1 beta' and 1 omega subunit. When a sigma factor is associated with the core the holoenzyme is formed, which can initiate transcription.

It catalyses the reaction RNA(n) + a ribonucleoside 5'-triphosphate = RNA(n+1) + diphosphate. Its function is as follows. DNA-dependent RNA polymerase catalyzes the transcription of DNA into RNA using the four ribonucleoside triphosphates as substrates. This chain is DNA-directed RNA polymerase subunit beta, found in Rhizobium meliloti (strain 1021) (Ensifer meliloti).